Consider the following 86-residue polypeptide: Molybdopterin synthase sulfur carrier subunit (86 aa).

A 1-thioglycine; alternate modification is found at glycine 86. Glycyl adenylate; alternate is present on glycine 86.

The protein belongs to the MoaD family. MOCS2A subfamily. As to quaternary structure, heterotetramer; composed of 2 small (mocs2s) and 2 large (mocs2l) subunits. Post-translationally, C-terminal thiocarboxylation occurs in 2 steps, it is first acyl-adenylated (-COAMP) via the hesA/moeB/thiF part of mocs3, then thiocarboxylated (-COSH) via the rhodanese domain of mocs3.

It is found in the cytoplasm. It participates in cofactor biosynthesis; molybdopterin biosynthesis. Its function is as follows. Acts as a sulfur carrier required for molybdopterin biosynthesis. Component of the molybdopterin synthase complex that catalyzes the conversion of precursor Z into molybdopterin by mediating the incorporation of 2 sulfur atoms into precursor Z to generate a dithiolene group. In the complex, serves as sulfur donor by being thiocarboxylated (-COSH) at its C-terminus by mocs3. After interaction with mocs2l, the sulfur is then transferred to precursor Z to form molybdopterin. The polypeptide is Molybdopterin synthase sulfur carrier subunit (mocs2s) (Dictyostelium discoideum (Social amoeba)).